A 201-amino-acid chain; its full sequence is Molybdenum cofactor guanylyltransferase (201 aa).

Residues 15–17 (LAG), Lys28, Asp74, and Asp104 each bind GTP. Residue Asp104 participates in Mg(2+) binding.

It belongs to the MobA family. Monomer. The cofactor is Mg(2+).

The protein localises to the cytoplasm. The enzyme catalyses Mo-molybdopterin + GTP + H(+) = Mo-molybdopterin guanine dinucleotide + diphosphate. In terms of biological role, transfers a GMP moiety from GTP to Mo-molybdopterin (Mo-MPT) cofactor (Moco or molybdenum cofactor) to form Mo-molybdopterin guanine dinucleotide (Mo-MGD) cofactor. This is Molybdenum cofactor guanylyltransferase from Pseudomonas syringae pv. syringae (strain B728a).